The chain runs to 243 residues: Adenosylcobinamide-GDP ribazoletransferase (243 aa).

The next 5 membrane-spanning stretches (helical) occupy residues 31 to 51 (LLFY…FSAL), 57 to 77 (LMLH…GLHL), 109 to 129 (IAVV…LALI), 135 to 155 (IGLL…FLGT), and 188 to 208 (VLLA…CFFW).

Belongs to the CobS family. Requires Mg(2+) as cofactor.

The protein resides in the cell inner membrane. The enzyme catalyses alpha-ribazole + adenosylcob(III)inamide-GDP = adenosylcob(III)alamin + GMP + H(+). It catalyses the reaction alpha-ribazole 5'-phosphate + adenosylcob(III)inamide-GDP = adenosylcob(III)alamin 5'-phosphate + GMP + H(+). Its pathway is cofactor biosynthesis; adenosylcobalamin biosynthesis; adenosylcobalamin from cob(II)yrinate a,c-diamide: step 7/7. Joins adenosylcobinamide-GDP and alpha-ribazole to generate adenosylcobalamin (Ado-cobalamin). Also synthesizes adenosylcobalamin 5'-phosphate from adenosylcobinamide-GDP and alpha-ribazole 5'-phosphate. The protein is Adenosylcobinamide-GDP ribazoletransferase of Pseudomonas savastanoi pv. phaseolicola (strain 1448A / Race 6) (Pseudomonas syringae pv. phaseolicola (strain 1448A / Race 6)).